The primary structure comprises 130 residues: Small ribosomal subunit protein uS8 (130 aa).

Belongs to the universal ribosomal protein uS8 family. As to quaternary structure, part of the 30S ribosomal subunit.

Functionally, one of the primary rRNA binding proteins, it binds directly to 16S rRNA central domain where it helps coordinate assembly of the platform of the 30S subunit. The chain is Small ribosomal subunit protein uS8 from Methanosphaera stadtmanae (strain ATCC 43021 / DSM 3091 / JCM 11832 / MCB-3).